A 309-amino-acid chain; its full sequence is MPGIAYLGPEGTFTEAALRALDAQGLIPATQSGAGSVTPLATDSTPAALAAVRAGDADFACVPIENSIDGPVIPTLDSLADGVPLQIYAELTLDVSFTIAVRPGVTAADVRTVAAFPVAAAQVKRWLSENLPNVELVPSNSNAAAARDVADGRAEAAVSTALATERYGLDTLAAGIVDEPNARTRFVLVGCPGPPPKRTGSDRTSVVLRLDNVPGALVTAMNELAIRGIDLTGIESRPTRTELGTYRFYLDFVGHIDDDAVAGALRALHRRCADVRYLGSWPTGETGGAAPPPLDEATAWLQRLREGRP.

The Prephenate dehydratase domain occupies 3-191 (GIAYLGPEGT…ARTRFVLVGC (189 aa)). The region spanning 205–282 (SVVLRLDNVP…ADVRYLGSWP (78 aa)) is the ACT domain.

Homodimer.

It catalyses the reaction prephenate + H(+) = 3-phenylpyruvate + CO2 + H2O. Its pathway is amino-acid biosynthesis; L-phenylalanine biosynthesis; phenylpyruvate from prephenate: step 1/1. The chain is Prephenate dehydratase (pheA) from Mycolicibacterium gilvum (strain PYR-GCK) (Mycobacterium gilvum (strain PYR-GCK)).